Consider the following 501-residue polypeptide: Calcium-dependent protein kinase 4 (501 aa).

The Protein kinase domain maps to Y25–I283. Residues L31 to T39 and K54 each bind ATP. D149 functions as the Proton acceptor in the catalytic mechanism. S189 bears the Phosphoserine mark. Residues A289 to I319 are autoinhibitory domain. EF-hand domains lie at E326–E361, L362–M397, E398–C433, and L437–V467. Residues D339, D341, S343, T345, E350, D375, D377, S379, T381, E386, D411, D413, S415, Y417, E422, D445, D447, D449, K451, and E456 each contribute to the Ca(2+) site.

It belongs to the protein kinase superfamily. Ser/Thr protein kinase family. CDPK subfamily. As to quaternary structure, interacts with Di19.

It is found in the cytoplasm. Its subcellular location is the nucleus. The catalysed reaction is L-seryl-[protein] + ATP = O-phospho-L-seryl-[protein] + ADP + H(+). The enzyme catalyses L-threonyl-[protein] + ATP = O-phospho-L-threonyl-[protein] + ADP + H(+). Activated by calcium. Autophosphorylation may play an important role in the regulation of the kinase activity. Functionally, may play a role in signal transduction pathways that involve calcium as a second messenger. Functions as a regulator of the calcium-mediated abscisic acid (ABA) signaling pathway. Phosphorylates ABA-responsive transcription factors ABF1 and ABF4 in vitro. Phosphorylates the nuclear zinc finger Di19 in vitro. In Arabidopsis thaliana (Mouse-ear cress), this protein is Calcium-dependent protein kinase 4 (CPK4).